The sequence spans 502 residues: Lysine--tRNA ligase (502 aa).

2 residues coordinate Mg(2+): Glu-403 and Glu-410.

The protein belongs to the class-II aminoacyl-tRNA synthetase family. Homodimer. Mg(2+) serves as cofactor.

It localises to the cytoplasm. It carries out the reaction tRNA(Lys) + L-lysine + ATP = L-lysyl-tRNA(Lys) + AMP + diphosphate. This chain is Lysine--tRNA ligase, found in Synechococcus sp. (strain CC9902).